We begin with the raw amino-acid sequence, 146 residues long: Anti-sigma F factor (146 aa).

It belongs to the anti-sigma-factor family.

It carries out the reaction L-seryl-[protein] + ATP = O-phospho-L-seryl-[protein] + ADP + H(+). The enzyme catalyses L-threonyl-[protein] + ATP = O-phospho-L-threonyl-[protein] + ADP + H(+). Functionally, binds to sigma F and blocks its ability to form an RNA polymerase holoenzyme (E-sigma F). Phosphorylates SpoIIAA on a serine residue. This phosphorylation may enable SpoIIAA to act as an anti-anti-sigma factor that counteracts SpoIIAB and thus releases sigma F from inhibition. The chain is Anti-sigma F factor from Bacillus licheniformis.